The primary structure comprises 586 residues: Asparagine synthetase [glutamine-hydrolyzing] (586 aa).

Residue cysteine 2 is the For GATase activity of the active site. Residues 2 to 185 enclose the Glutamine amidotransferase type-2 domain; sequence CGILAVLGVV…PGHLYSSKTG (184 aa). L-glutamine is bound by residues 50 to 54, 75 to 77, and aspartate 98; these read RLAII and NGE. Positions 193 to 516 constitute an Asparagine synthetase domain; sequence PPWFSETVPS…PQDSARETVP (324 aa). ATP-binding positions include leucine 231, isoleucine 267, and 341 to 342; that span reads SG.

The catalysed reaction is L-aspartate + L-glutamine + ATP + H2O = L-asparagine + L-glutamate + AMP + diphosphate + H(+). It functions in the pathway amino-acid biosynthesis; L-asparagine biosynthesis; L-asparagine from L-aspartate (L-Gln route): step 1/1. In terms of biological role, essential for nitrogen assimilation, distribution and remobilization within the plant via the phloem. This Zea mays (Maize) protein is Asparagine synthetase [glutamine-hydrolyzing] (ASN1).